The following is a 496-amino-acid chain: Acyltransferase clz6 (496 aa).

The active-site Proton acceptor is His-163.

This sequence belongs to the plant acyltransferase family. Monomer.

The protein operates within secondary metabolite biosynthesis. Functionally, acyltransferase; part of the gene cluster that mediates the biosynthesis of squalestatin S1 (SQS1, also known as zaragozic acid A), a heavily oxidized fungal polyketide that offers potent cholesterol lowering activity by targeting squalene synthase (SS). SQS1 is composed of a 2,8-dioxobicyclic[3.2.1]octane-3,4,5-tricarboxyclic acid core that is connected to two lipophilic polyketide arms. These initial steps feature the priming of an unusual benzoic acid starter unit onto the highly reducing polyketide synthase clz14, followed by oxaloacetate extension and product release to generate a tricarboxylic acid containing product. The phenylalanine ammonia lyase (PAL) clz10 and the acyl-CoA ligase clz12 are involved in transforming phenylalanine into benzoyl-CoA. The citrate synthase-like protein clz17 is involved in connecting the C-alpha-carbons of the hexaketide chain and oxaloacetate to afford the tricarboxylic acid unit. The potential hydrolytic enzymes, clz11 and clz13, are in close proximity to pks2 and may participate in product release. On the other side, the tetraketide arm is synthesized by a the squalestatin tetraketide synthase clz2 and enzymatically esterified to the core in the last biosynthetic step, by the acetyltransferase clz6. The biosynthesis of the tetraketide must involve 3 rounds of chain extension. After the first and second rounds methyl-transfer occurs, and in all rounds of extension the ketoreductase and dehydratase are active. The enoyl reductase and C-MeT of clz2 are not active in the final round of extension. The acetyltransferase clz6 appears to have a broad substrate selectivity for its acyl CoA substrate, allowing the in vitro synthesis of novel squalestatins. The biosynthesis of SQS1 requires several oxidative steps likely performed by oxidoreductases clz3, clz15 and clz16. Finally, in support of the identification of the cluster as being responsible for SQS1 production, the cluster contains a gene encoding a putative squalene synthase (SS) clz20, suggesting a likely mechanism for self-resistance. The polypeptide is Acyltransferase clz6 (Cochliobolus lunatus (Filamentous fungus)).